Consider the following 556-residue polypeptide: Small ribosomal subunit protein uS3m (556 aa).

Belongs to the universal ribosomal protein uS3 family. In terms of assembly, component of the mitochondrial ribosome small subunit.

The protein resides in the mitochondrion. The sequence is that of Small ribosomal subunit protein uS3m (RPS3) from Arabidopsis thaliana (Mouse-ear cress).